A 900-amino-acid polypeptide reads, in one-letter code: MTEMMTPAMRQYYEAKQAYPDTLIFFRMGDFYESFGEDAKTIAKELEITLTARGKDRSGERMPLAGIPYHAIDTYLPRLINKGYKVAICEQLEDPKQAKGVVKRGVVRVVTPGTAIDSSMFPDASNNYLMAVAGKEVGKTGKSGEKEMEFGLSFLDISTGEFLTTQFTDSGSFDKLLSELARMKPAECILPPTLYGNSVLVDRLREQTIVQEFAPEISGIEEAGEKLKIHFRVSTLEGMGCEKLEFGVYSAWSALEYAKTTQMRDLAHINTLRTYSNTEFMVLDSVTLRNLEIVKNVRDEGDHNSLYRTLSFTKTPMGSRILKKWLLKPLLSVEQINHRLDAVEELAGNPLLRYDIRDWLSEVRDIERLVGRIVYGNANARDLVALKKSLDAVPSIRDCLLEKAGAEMLKGIAEGLASFSEIEELAKMIGNAIVEEPPVSVREGGMIKSGFSEELDELRDISSNSKQWIAAFQQKEKDRTGIKSLKIGYNKVFGYYIEVTNANSSQVPDDYIRKQTMANAERFFTPELKEKESLILTANDKAVALEYEIFTEITETLSAHSKELQETAERIGVLDVLADLAEVAENNNYTRPQLTEDCKILIRDGRHPVVESTVSGGFVPNDTEMDCKENQFLLVTGPNMAGKSTYMRQTALIAIMAQAGSFVPASYASIGVIDQVFTRIGAFDDLASGQSTFMVEMVELANILNNASPKSLVLLDEIGRGTSTYDGYSIAKAVVEFLHNRGKVGIRALFATHYHQLTSLEEKLKRVKNYHIAVKEEGHELVFLRKIVPGATDRSYGIHVARLAGVPEKVIERANEILRELERESVLEESEDCENGKKRKGKATTRYTQMLLFDPGSRSGNSEVKRGLSPVEAALKKMNVDEMTPIEAMNKLHELKKLLG.

637–644 lines the ATP pocket; that stretch reads GPNMAGKS.

It belongs to the DNA mismatch repair MutS family.

This protein is involved in the repair of mismatches in DNA. It is possible that it carries out the mismatch recognition step. This protein has a weak ATPase activity. The polypeptide is DNA mismatch repair protein MutS (Methanosarcina mazei (strain ATCC BAA-159 / DSM 3647 / Goe1 / Go1 / JCM 11833 / OCM 88) (Methanosarcina frisia)).